The chain runs to 129 residues: Small ribosomal subunit protein uS9 (129 aa).

Residues 97 to 129 (LKAQGFLTRDPRKKERKKYGRKKARKSFQFSKR) are disordered. Basic residues predominate over residues 110 to 129 (KERKKYGRKKARKSFQFSKR).

It belongs to the universal ribosomal protein uS9 family.

The sequence is that of Small ribosomal subunit protein uS9 from Chlamydia trachomatis serovar A (strain ATCC VR-571B / DSM 19440 / HAR-13).